Reading from the N-terminus, the 96-residue chain is Muconolactone Delta-isomerase 2 (96 aa).

It belongs to the muconolactone Delta-isomerase family. In terms of assembly, homodecamer.

It carries out the reaction (S)-muconolactone = (4,5-dihydro-5-oxofuran-2-yl)-acetate. It functions in the pathway aromatic compound metabolism; beta-ketoadipate pathway; 5-oxo-4,5-dihydro-2-furylacetate from catechol: step 3/3. The chain is Muconolactone Delta-isomerase 2 (catC2) from Acinetobacter lwoffii.